Consider the following 406-residue polypeptide: L-carnitine CoA-transferase (406 aa).

Lysine 98 and arginine 105 together coordinate CoA. The Nucleophile role is filled by aspartate 170.

It belongs to the CoA-transferase III family. CaiB subfamily. Homodimer.

The protein resides in the cytoplasm. The catalysed reaction is crotonobetainyl-CoA + (R)-carnitine = crotonobetaine + (R)-carnitinyl-CoA. The enzyme catalyses 4-(trimethylamino)butanoyl-CoA + (R)-carnitine = (R)-carnitinyl-CoA + 4-(trimethylamino)butanoate. The protein operates within amine and polyamine metabolism; carnitine metabolism. Catalyzes the reversible transfer of the CoA moiety from gamma-butyrobetainyl-CoA to L-carnitine to generate L-carnitinyl-CoA and gamma-butyrobetaine. Is also able to catalyze the reversible transfer of the CoA moiety from gamma-butyrobetainyl-CoA or L-carnitinyl-CoA to crotonobetaine to generate crotonobetainyl-CoA. This is L-carnitine CoA-transferase from Proteus mirabilis (strain HI4320).